The primary structure comprises 356 residues: MATSAPVTSRTETLAKYLKLDQKGQIMAEYVWVDAAGETRSKSRTLPEKDYKAEDLPVWNFDGSSTNQAPGDNSDVYLRPCAVYPDPFRGSPNIIVLAECWNAGGTPNKFNFRHDCVKVMDTYAEDEPWFGLEQEYTLLGPDNRPYGWPTGGFPAPQGEYYCGVGTGKVVQRDIVEAHYKACLYAGIQISGTNAEVMPAQWEYQVGPCLGIEMGDQLWVSRFFLARITEEFGAKVSLHPKPIAGDWNGAGLHSNFSTKAMREEGGMKVIEEALKKLEPHHAECIAEYGEDNELRLTGRHETGSIDSFSWGVANRGTSIRAPRETAAKGYGYFEDRRPASNADPYRVTKALLQFSLA.

The GS beta-grasp domain occupies Ile-26–Gly-105. The GS catalytic domain maps to Phe-112–Ala-356.

Belongs to the glutamine synthetase family. Homooctamer.

It is found in the cytoplasm. The catalysed reaction is L-glutamate + NH4(+) + ATP = L-glutamine + ADP + phosphate + H(+). The chain is Glutamine synthetase (GLN1) from Fusarium solani subsp. phaseoli (Nectria haematococca).